Consider the following 126-residue polypeptide: Holo-[acyl-carrier-protein] synthase (126 aa).

Mg(2+) is bound by residues Asp9 and Glu58.

The protein belongs to the P-Pant transferase superfamily. AcpS family. Mg(2+) serves as cofactor.

It localises to the cytoplasm. It carries out the reaction apo-[ACP] + CoA = holo-[ACP] + adenosine 3',5'-bisphosphate + H(+). Its function is as follows. Transfers the 4'-phosphopantetheine moiety from coenzyme A to a Ser of acyl-carrier-protein. In Buchnera aphidicola subsp. Acyrthosiphon pisum (strain APS) (Acyrthosiphon pisum symbiotic bacterium), this protein is Holo-[acyl-carrier-protein] synthase.